A 206-amino-acid polypeptide reads, in one-letter code: Uridine kinase (206 aa).

Residue 11–18 (GGTGSGKS) coordinates ATP.

Belongs to the uridine kinase family.

The protein resides in the cytoplasm. It carries out the reaction uridine + ATP = UMP + ADP + H(+). It catalyses the reaction cytidine + ATP = CMP + ADP + H(+). Its pathway is pyrimidine metabolism; CTP biosynthesis via salvage pathway; CTP from cytidine: step 1/3. It participates in pyrimidine metabolism; UMP biosynthesis via salvage pathway; UMP from uridine: step 1/1. This chain is Uridine kinase, found in Clostridium botulinum (strain 657 / Type Ba4).